The sequence spans 210 residues: Calcineurin B-like protein 4 (210 aa).

Gly-2 carries the N-myristoyl glycine lipid modification. EF-hand domains are found at residues 31-66 (EVEALRELYNKMSYSIIKDGLIHKEEFQLALFRNSR), 67-102 (KANLFADRVFDLFDLKRNGVIEFGEFVRSLSVFHPK), 104-139 (PKSEKTAFAFKLYDLRGTGYIEKEELREMVLALLDE), and 148-183 (AVEAIVDNTFSQADSNGDGRIDPEEWEEFVKANPAS). Ca(2+) contacts are provided by Asp-161, Asn-163, Asp-165, Arg-167, and Glu-172.

It belongs to the calcineurin regulatory subunit family. In terms of assembly, homodimer. Interacts with CIPK24. Expressed in leaves.

It localises to the cell membrane. Acts as a calcium sensor involved in the regulatory pathway for the control of intracellular Na(+) and K(+) homeostasis and salt tolerance. Operates in synergy with CIPK24 to activate the plasma membrane Na(+)/H(+) antiporter SOS1. May function as positive regulator of salt stress responses. CBL proteins interact with CIPK serine-threonine protein kinases. Binding of a CBL protein to the regulatory NAF domain of a CIPK protein lead to the activation of the kinase in a calcium-dependent manner. In Oryza sativa subsp. japonica (Rice), this protein is Calcineurin B-like protein 4 (CBL4).